The following is a 353-amino-acid chain: Photosystem II D2 protein (353 aa).

N-acetylthreonine is present on threonine 2. Threonine 2 is modified (phosphothreonine). Residues 41–61 form a helical membrane-spanning segment; the sequence is CAYFALGGWLTGTTFVTSWYT. Histidine 118 serves as a coordination point for chlorophyll a. Residues 125-141 form a helical membrane-spanning segment; the sequence is GFMLRQFEIARSVQLRP. 2 residues coordinate pheophytin a: glutamine 130 and asparagine 143. A helical transmembrane segment spans residues 153-166; that stretch reads VFVSVFLIYPLGQS. Histidine 198 is a chlorophyll a binding site. A helical membrane pass occupies residues 208–228; sequence AALLCAIHGATVENTIFEDGD. Residues histidine 215 and phenylalanine 262 each coordinate a plastoquinone. A Fe cation-binding site is contributed by histidine 215. Histidine 269 lines the Fe cation pocket. The chain crosses the membrane as a helical span at residues 279–295; the sequence is GLWMSAVGVVGLAVNLR.

It belongs to the reaction center PufL/M/PsbA/D family. In terms of assembly, PSII is composed of 1 copy each of membrane proteins PsbA, PsbB, PsbC, PsbD, PsbE, PsbF, PsbH, PsbI, PsbJ, PsbK, PsbL, PsbM, PsbT, PsbX, PsbY, PsbZ, Psb30/Ycf12, at least 3 peripheral proteins of the oxygen-evolving complex and a large number of cofactors. It forms dimeric complexes. It depends on The D1/D2 heterodimer binds P680, chlorophylls that are the primary electron donor of PSII, and subsequent electron acceptors. It shares a non-heme iron and each subunit binds pheophytin, quinone, additional chlorophylls, carotenoids and lipids. There is also a Cl(-1) ion associated with D1 and D2, which is required for oxygen evolution. The PSII complex binds additional chlorophylls, carotenoids and specific lipids. as a cofactor.

It is found in the plastid. The protein resides in the chloroplast thylakoid membrane. The catalysed reaction is 2 a plastoquinone + 4 hnu + 2 H2O = 2 a plastoquinol + O2. Functionally, photosystem II (PSII) is a light-driven water:plastoquinone oxidoreductase that uses light energy to abstract electrons from H(2)O, generating O(2) and a proton gradient subsequently used for ATP formation. It consists of a core antenna complex that captures photons, and an electron transfer chain that converts photonic excitation into a charge separation. The D1/D2 (PsbA/PsbD) reaction center heterodimer binds P680, the primary electron donor of PSII as well as several subsequent electron acceptors. D2 is needed for assembly of a stable PSII complex. The sequence is that of Photosystem II D2 protein from Chaetosphaeridium globosum (Charophycean green alga).